A 36-amino-acid polypeptide reads, in one-letter code: Photosystem I reaction center subunit VIII (36 aa).

A helical membrane pass occupies residues 8–28; the sequence is SIFVPLVGLVFPAIAIASLFL.

This sequence belongs to the PsaI family.

The protein resides in the plastid. The protein localises to the chloroplast thylakoid membrane. Its function is as follows. May help in the organization of the PsaL subunit. The protein is Photosystem I reaction center subunit VIII of Jasminum nudiflorum (Winter jasmine).